The following is a 343-amino-acid chain: Multidrug resistance protein MdtN (343 aa).

Topologically, residues 1-12 are cytoplasmic; it reads MESTPKKAPRSK. A helical; Signal-anchor for type II membrane protein transmembrane segment spans residues 13 to 33; the sequence is FPALLVVALALVALVFVIWRV. Residues 34 to 343 are Periplasmic-facing; it reads DSAPSTNDAY…ASAVANLEPQ (310 aa).

The protein belongs to the membrane fusion protein (MFP) (TC 8.A.1) family. As to quaternary structure, could be part of a tripartite efflux system composed of MdtN, MdtO and MdtP.

The protein localises to the cell inner membrane. Could be involved in resistance to puromycin, acriflavine and tetraphenylarsonium chloride. This Escherichia coli (strain K12) protein is Multidrug resistance protein MdtN (mdtN).